A 250-amino-acid chain; its full sequence is MGRGRVELKMIENKINRQVTFAKRRKRLLKKAYELSVLCDAEVALIIFSNRGKLYEFCSSTSMLKTLEKYQKCNFGSPESTIISRETQSSQQEYLKLKNRVEALQRSQRNLLGEDLGPLGSKELEQLERQLDSSLRQIRSTRTQFMLDQLADLQRREQMLCEANKTLKRRFEESSQANQQQVWDPSNTHAVGYGRQPAQHHGEAFYHPLECEPTLQIGYHSDITMATATASTVNNYMPPGWLGQISGSYE.

Residues 3–57 (RGRVELKMIENKINRQVTFAKRRKRLLKKAYELSVLCDAEVALIIFSNRGKLYEF) enclose the MADS-box domain. Positions 87-177 (TQSSQQEYLK…KRRFEESSQA (91 aa)) constitute a K-box domain.

In terms of tissue distribution, expressed in petals and weakly in sepals but not in the column (gynostemium).

It is found in the nucleus. Probable transcription factor active in inflorescence development and floral organogenesis. The polypeptide is Agamous-like MADS-box protein AGL9 homolog (Aranda deborah (Orchid)).